A 547-amino-acid polypeptide reads, in one-letter code: Intercellular adhesion molecule 3 (547 aa).

A signal peptide spans 1 to 29; that stretch reads MATMVPSVLWPRACWTLLVCCLLTPGVQG. Residues 30–485 lie on the Extracellular side of the membrane; that stretch reads QEFLLRVEPQ…VMDIEAGSSH (456 aa). The region spanning 46–103 is the Ig-like C2-type 1 domain; sequence GGSLFVNCSTDCPSSEKIALETSLSKELVASGMGWAAFNLSNVTGNSRILCSVYCNGS. 6 N-linked (GlcNAc...) asparagine glycosylation sites follow: N52, N84, N87, N101, N110, and N134. Disulfide bonds link C53/C96 and C57/C100. Residues 132 to 197 enclose the Ig-like C2-type 2 domain; sequence GQNFTLRCQV…FSCRTELDMQ (66 aa). C139 and C190 are oxidised to a cystine. N-linked (GlcNAc...) asparagine glycosylation is found at N206, N264, N295, N308, N320, N363, N389, N453, and N457. In terms of domain architecture, Ig-like C2-type 3 spans 234-301; the sequence is ETSWPVDCTL…IVCNVTLGGE (68 aa). C241 and C294 are joined by a disulfide. One can recognise an Ig-like C2-type 4 domain in the interval 329 to 382; the sequence is GSTVTVSCMAGARVQVTLDGVPAAAPGQPAQLQLNATESDDGRSFFCSATLEVD. C336 and C375 are oxidised to a cystine. The 54-residue stretch at 416–469 folds into the Ig-like C2-type 5 domain; the sequence is KTRHVLQCQARGNPYPELRCLKEGSSREVPVGIPFFVNVTHNGTYQCQASSSRG. A disulfide bridge connects residues C423 and C462. A helical membrane pass occupies residues 486–510; sequence FVPVFVAVLLTLGVVTIVLALMYVF. The Cytoplasmic segment spans residues 511 to 547; that stretch reads REHQRSGSYHVREESTYLPLTSMQPTEAMGEEPSRAE.

This sequence belongs to the immunoglobulin superfamily. ICAM family. As to quaternary structure, interacts with moesin/MSN. Post-translationally, upon stimulation by a physiologic stimuli becomes rapidly and transiently phosphorylated on serine residues. N-glycosylated; glycans consist of a mixture of tri- and tetra-antennary complex-type chains and high-mannose chains. Leukocytes.

It is found in the membrane. In terms of biological role, ICAM proteins are ligands for the leukocyte adhesion protein LFA-1 (integrin alpha-L/beta-2). ICAM3 is also a ligand for integrin alpha-D/beta-2. In association with integrin alpha-L/beta-2, contributes to apoptotic neutrophil phagocytosis by macrophages. In Homo sapiens (Human), this protein is Intercellular adhesion molecule 3 (ICAM3).